The primary structure comprises 221 residues: Probable N-acetyl-alpha-D-glucosaminyl L-malate deacetylase 2 (221 aa).

Zn(2+)-binding residues include histidine 11, aspartate 14, and histidine 125.

This sequence belongs to the PIGL family. The cofactor is Zn(2+).

The enzyme catalyses (S)-malyl N-acetyl-alpha-D-glucosaminide + H2O = (S)-malyl alpha-D-glucosaminide + acetate. Involved in bacillithiol (BSH) biosynthesis. Catalyzes the second step of the pathway, the deacetylation of N-acetylglucosaminylmalate (GlcNAc-Mal) to glucosamine malate (GlcN-Mal). The protein is Probable N-acetyl-alpha-D-glucosaminyl L-malate deacetylase 2 of Bacillus subtilis (strain 168).